The sequence spans 240 residues: Probable alpha-aspartyl dipeptidase (240 aa).

Residues Ser125, Asp140, and His162 each act as charge relay system in the active site.

The protein belongs to the peptidase S51 family.

The protein localises to the cytoplasm. It catalyses the reaction Dipeptidase E catalyzes the hydrolysis of dipeptides Asp-|-Xaa. It does not act on peptides with N-terminal Glu, Asn or Gln, nor does it cleave isoaspartyl peptides.. In terms of biological role, hydrolyzes dipeptides containing N-terminal aspartate residues. This chain is Probable alpha-aspartyl dipeptidase, found in Drosophila melanogaster (Fruit fly).